We begin with the raw amino-acid sequence, 317 residues long: Methionyl-tRNA formyltransferase (317 aa).

112–115 (SLLP) contributes to the (6S)-5,6,7,8-tetrahydrofolate binding site.

This sequence belongs to the Fmt family.

It catalyses the reaction L-methionyl-tRNA(fMet) + (6R)-10-formyltetrahydrofolate = N-formyl-L-methionyl-tRNA(fMet) + (6S)-5,6,7,8-tetrahydrofolate + H(+). Functionally, attaches a formyl group to the free amino group of methionyl-tRNA(fMet). The formyl group appears to play a dual role in the initiator identity of N-formylmethionyl-tRNA by promoting its recognition by IF2 and preventing the misappropriation of this tRNA by the elongation apparatus. The protein is Methionyl-tRNA formyltransferase of Histophilus somni (strain 2336) (Haemophilus somnus).